Here is a 125-residue protein sequence, read N- to C-terminus: uncharacterized protein (125 aa).

Residues 1–46 (MFFDTKVLNYPTIHKSISMASTMQRTSSSAASNERQLSQLQRRAPS) constitute a chloroplast transit peptide.

The protein localises to the plastid. Its subcellular location is the chloroplast. This is an uncharacterized protein from Arabidopsis thaliana (Mouse-ear cress).